The sequence spans 181 residues: Peptidyl-tRNA hydrolase 2, mitochondrial (181 aa).

The chain crosses the membrane as a helical span at residues 10-32 (YLVHPGTLSLAAGVACGMCLGWG). Glycyl lysine isopeptide (Lys-Gly) (interchain with G-Cter in ubiquitin) cross-links involve residues Lys78, Lys83, Lys97, Lys108, Lys117, and Lys179.

This sequence belongs to the PTH2 family. In terms of assembly, monomer. In terms of processing, ubiquitinated by PRKN during mitophagy, leading to its degradation and enhancement of mitophagy. Deubiquitinated by USP30.

The protein localises to the mitochondrion outer membrane. The catalysed reaction is an N-acyl-L-alpha-aminoacyl-tRNA + H2O = an N-acyl-L-amino acid + a tRNA + H(+). Peptidyl-tRNA hydrolase which releases tRNAs from the ribosome during protein synthesis. Promotes caspase-independent apoptosis by regulating the function of two transcriptional regulators, AES and TLE1. This is Peptidyl-tRNA hydrolase 2, mitochondrial (Ptrh2) from Mus musculus (Mouse).